The sequence spans 361 residues: MKTLIAAYSGVLRGTGSSILSALQDLFSVTWLNRAKVEKQLQVISVLQWVLSFLVLGVACSVILMYTFCTDCWLIAVLYFTWLVFDWNTPKKGGRRSQWVRNWAVWRYFRDYFPIQLVKTHNLLTSRNYIFGYHPHGIMGLGAFCNFSTEATEVSKKFPGIRPYLATLAGNFRMPVLREYLMSGGICPVNRDTIDYLLSKNGSGNAIIIVVGGAAESLSSMPGKNAVTLRNRKGFVKLALRHGADLVPTYSFGENEVYKQVIFEEGSWGRWVQKKFQKYIGFAPCIFHGRGLFSSDTWGLVPYSKPITTVVGEPITIPRLERPTQQDIDLYHAMYVQALVKLFDQHKTKFGLPETEVLEVN.

Over 1-42 (MKTLIAAYSGVLRGTGSSILSALQDLFSVTWLNRAKVEKQLQ) the chain is Cytoplasmic. A helical membrane pass occupies residues 43–61 (VISVLQWVLSFLVLGVACS). Topologically, residues 62–65 (VILM) are lumenal. The helical transmembrane segment at 66–85 (YTFCTDCWLIAVLYFTWLVF) threads the bilayer. Topologically, residues 86-361 (DWNTPKKGGR…LPETEVLEVN (276 aa)) are cytoplasmic.

The protein belongs to the diacylglycerol acyltransferase family. Forms multimeric complexes consisting of several DGAT2 subunits. Interacts with SLC27A1 and this interaction is enhanced in the presence of ZFYVE1.

It localises to the endoplasmic reticulum membrane. Its subcellular location is the lipid droplet. The protein resides in the cytoplasm. It is found in the perinuclear region. The catalysed reaction is an acyl-CoA + a 1,2-diacyl-sn-glycerol = a triacyl-sn-glycerol + CoA. It catalyses the reaction all-trans-retinol + an acyl-CoA = an all-trans-retinyl ester + CoA. It carries out the reaction 2-(9Z-octadecenoyl)-glycerol + (9Z)-octadecenoyl-CoA = 1,2-di-(9Z-octadecenoyl)-sn-glycerol + CoA. The enzyme catalyses 1,2-di-(9Z-octadecenoyl)-sn-glycerol + (9Z)-octadecenoyl-CoA = 1,2,3-tri-(9Z-octadecenoyl)-glycerol + CoA. The catalysed reaction is all-trans-retinol + hexadecanoyl-CoA = all-trans-retinyl hexadecanoate + CoA. It catalyses the reaction 1-O-(9Z-octadecenyl)-glycerol + (9Z)-octadecenoyl-CoA = 1-O-(9Z-octadecyl)-3-(9Z-octadecenoyl)-glycerol + CoA. It carries out the reaction 1-(9Z-octadecenoyl)-glycerol + (9Z)-octadecenoyl-CoA = 1,2-di-(9Z-octadecenoyl)-glycerol + CoA. The enzyme catalyses 1,2-di-(9Z-octadecenoyl)-sn-glycerol + hexadecanoyl-CoA = 1,2-di-(9Z)-octadecenoyl-3-hexadecanoyl-sn-glycerol + CoA. The catalysed reaction is 1,3-di-(9Z-octadecenoyl)-glycerol + (9Z)-octadecenoyl-CoA = 1,2,3-tri-(9Z-octadecenoyl)-glycerol + CoA. It catalyses the reaction 2,3-di-(9Z)-octadecenoyl-sn-glycerol + (9Z)-octadecenoyl-CoA = 1,2,3-tri-(9Z-octadecenoyl)-glycerol + CoA. It carries out the reaction 2-(9Z-octadecenoyl)-glycerol + hexadecanoyl-CoA = 1-hexadecanoyl-2-(9Z-octadecenoyl)-sn-glycerol + CoA. It participates in glycerolipid metabolism; triacylglycerol biosynthesis. Inhibited by niacin. Functionally, essential acyltransferase that catalyzes the terminal and only committed step in triacylglycerol synthesis by using diacylglycerol and fatty acyl CoA as substrates. Required for synthesis and storage of intracellular triglycerides. Probably plays a central role in cytosolic lipid accumulation. In liver, is primarily responsible for incorporating endogenously synthesized fatty acids into triglycerides. Also functions as an acyl-CoA retinol acyltransferase (ARAT). Also able to use 1-monoalkylglycerol (1-MAkG) as an acyl acceptor for the synthesis of monoalkyl-monoacylglycerol (MAMAG). The chain is Diacylglycerol O-acyltransferase 2 (DGAT2) from Bos taurus (Bovine).